A 245-amino-acid chain; its full sequence is Small ribosomal subunit protein uS2 (245 aa).

The protein belongs to the universal ribosomal protein uS2 family.

This chain is Small ribosomal subunit protein uS2, found in Pseudomonas fluorescens (strain SBW25).